Reading from the N-terminus, the 275-residue chain is Large ribosomal subunit protein uL2 (275 aa).

Residues 38–53 (NSKAGRNNNGRITTRH) are compositionally biased toward polar residues. 2 disordered regions span residues 38 to 59 (NSKA…GGHK) and 224 to 257 (AMNP…KGFR).

Belongs to the universal ribosomal protein uL2 family. In terms of assembly, part of the 50S ribosomal subunit. Forms a bridge to the 30S subunit in the 70S ribosome.

One of the primary rRNA binding proteins. Required for association of the 30S and 50S subunits to form the 70S ribosome, for tRNA binding and peptide bond formation. It has been suggested to have peptidyltransferase activity; this is somewhat controversial. Makes several contacts with the 16S rRNA in the 70S ribosome. The protein is Large ribosomal subunit protein uL2 of Burkholderia thailandensis (strain ATCC 700388 / DSM 13276 / CCUG 48851 / CIP 106301 / E264).